We begin with the raw amino-acid sequence, 420 residues long: Nucleoporin NUP42 (420 aa).

The C3H1-type zinc finger occupies 1–25 (MTICQFFLQGRCRFGDRCWNEHPGA). One copy of the FG 1 repeat lies at 14-15 (FG). The interval 25-111 (ARGAGGARQP…FASPLSDEQK (87 aa)) is disordered. Over residues 42-67 (SGNNRRGWNASSQRYSNVIQPSSFPK) the composition is skewed to polar residues. FG repeat units follow at residues 82-83 (FG), 95-96 (FG), 218-219 (FG), 220-221 (FG), 228-229 (FG), 265-266 (FG), 271-272 (FG), 288-289 (FG), 345-346 (FG), and 364-365 (FG). Residues 87–102 (SGASTSRGFGSSQNPF) show a composition bias toward polar residues. The interval 323-345 (MAASPSGSTTAPPLRSGSSVVGF) is disordered. Residues 365–420 (GGSGISTSVLASGAADNALFTPRDQLMKEELEQFQSQRFTLGKIPLKPPPVELLTV) are interaction with GLE1.

Probable component of the nuclear pore complex (NPC). Interacts with nuclear export protein NXF1. Interacts with GLE1. Able to form a heterotrimer with NUP155 and GLE1 in vitro. Interacts with XPO1. Post-translationally, O-glycosylated.

It is found in the nucleus. It localises to the nuclear pore complex. The protein localises to the nucleus membrane. Required for the export of mRNAs containing poly(A) tails from the nucleus into the cytoplasm. The chain is Nucleoporin NUP42 (Nup42) from Mus musculus (Mouse).